The primary structure comprises 689 residues: Small ribosomal subunit protein mS39 (689 aa).

Residues 1–37 constitute a mitochondrion transit peptide; the sequence is MAGVSAVRWLGLRSRLGQPLTGRRAGLCKQARSCRFY. Position 126 is an N6-acetyllysine (Lys-126). 10 PPR repeats span residues 149-183, 184-219, 255-289, 290-330, 331-367, 368-404, 412-446, 454-488, 489-523, and 572-606; these read IKDI…GTTV, SLET…EALE, NAHS…RLHA, DVYT…KVKP, NLQT…GIEP, SLAT…MGKR, DDKF…DNWK, RNFY…VYFP, HSQT…GHTF, and PATS…NKIP. Residues 665–689 form a disordered region; that stretch reads NLTALTSDSDTDSSSDSDSDTSEGK. A compositionally biased stretch (acidic residues) spans 673–689; sequence SDTDSSSDSDSDTSEGK.

This sequence belongs to the mitochondrion-specific ribosomal protein mS39 family. As to quaternary structure, component of the mitochondrial ribosome small subunit (28S) which comprises a 12S rRNA and about 30 distinct proteins. Associated with the 12S mitochondrial rRNA (12S mt-rRNA).

It localises to the mitochondrion. Mitochondrial RNA-binding protein that has a role in mitochondrial translation. The chain is Small ribosomal subunit protein mS39 (PTCD3) from Pongo abelii (Sumatran orangutan).